The chain runs to 115 residues: Transmembrane protein 218 (115 aa).

3 helical membrane passes run 5-25 (VLGV…VLLL), 38-58 (FSIV…LLFP), and 81-101 (YVLL…LLTH).

Belongs to the TMEM218 family. In terms of assembly, interacts with TMEM67.

The protein resides in the membrane. It is found in the cell projection. The protein localises to the cilium. In terms of biological role, may be involved in ciliary biogenesis or function. This chain is Transmembrane protein 218 (Tmem218), found in Mus musculus (Mouse).